Here is a 643-residue protein sequence, read N- to C-terminus: Carboxy-terminal kinesin 2 (643 aa).

Disordered stretches follow at residues 1–42 (MDST…SSLE) and 81–101 (MRPKNSGPGITSTSFSGKTKV). The interval 1–116 (MDSTDKKVQV…QPAAIGAEKK (116 aa)) is globular. Positions 88 to 101 (PGITSTSFSGKTKV) are enriched in polar residues. A coiled-coil region spans residues 117–296 (KRAAWDLKGQ…LVQELKGNIR (180 aa)). Residues 294 to 633 (NIRVFCRVRP…LRFASKVNEC (340 aa)) enclose the Kinesin motor domain. 386-393 (GQTGSGKT) is an ATP binding site.

It belongs to the TRAFAC class myosin-kinesin ATPase superfamily. Kinesin family. NCD subfamily.

Its subcellular location is the cytoplasm. It localises to the cytoskeleton. Functionally, promotes mitotic spindle assembly. The sequence is that of Carboxy-terminal kinesin 2 from Xenopus laevis (African clawed frog).